The following is a 785-amino-acid chain: Protein translocase subunit SecA 3 (785 aa).

ATP-binding positions include Gln98, 116-120 (GEGKT), and Asp505.

Belongs to the SecA family. In terms of assembly, monomer and homodimer. Part of the essential Sec protein translocation apparatus which comprises SecA, SecYEG and auxiliary proteins SecDF. Other proteins may also be involved.

The protein resides in the cell membrane. It is found in the cytoplasm. The enzyme catalyses ATP + H2O + cellular proteinSide 1 = ADP + phosphate + cellular proteinSide 2.. In terms of biological role, part of the Sec protein translocase complex. Interacts with the SecYEG preprotein conducting channel. Has a central role in coupling the hydrolysis of ATP to the transfer of proteins into and across the cell membrane, serving as an ATP-driven molecular motor driving the stepwise translocation of polypeptide chains across the membrane. The sequence is that of Protein translocase subunit SecA 3 from Mycolicibacterium vanbaalenii (strain DSM 7251 / JCM 13017 / BCRC 16820 / KCTC 9966 / NRRL B-24157 / PYR-1) (Mycobacterium vanbaalenii).